Consider the following 401-residue polypeptide: Lipoyl synthase 1, mitochondrial (401 aa).

A mitochondrion-targeting transit peptide spans 1–25 (MWSSSSSLCRNPSFRRAWLSTVTVT). The tract at residues 49–79 (IDDFSSTNAPTTTTHYTSSNGSPIVRQKAAP) is disordered. A compositionally biased stretch (polar residues) spans 51–70 (DFSSTNAPTTTTHYTSSNGS). Positions 117, 122, 128, 148, 152, 155, and 376 each coordinate [4Fe-4S] cluster. In terms of domain architecture, Radical SAM core spans 133-365 (EDQTATATIM…QETAMGMGFA (233 aa)).

Belongs to the radical SAM superfamily. Lipoyl synthase family. The cofactor is [4Fe-4S] cluster.

It is found in the mitochondrion. The catalysed reaction is [[Fe-S] cluster scaffold protein carrying a second [4Fe-4S](2+) cluster] + N(6)-octanoyl-L-lysyl-[protein] + 2 oxidized [2Fe-2S]-[ferredoxin] + 2 S-adenosyl-L-methionine + 4 H(+) = [[Fe-S] cluster scaffold protein] + N(6)-[(R)-dihydrolipoyl]-L-lysyl-[protein] + 4 Fe(3+) + 2 hydrogen sulfide + 2 5'-deoxyadenosine + 2 L-methionine + 2 reduced [2Fe-2S]-[ferredoxin]. The protein operates within protein modification; protein lipoylation via endogenous pathway; protein N(6)-(lipoyl)lysine from octanoyl-[acyl-carrier-protein]: step 2/2. Catalyzes the radical-mediated insertion of two sulfur atoms into the C-6 and C-8 positions of the octanoyl moiety bound to the lipoyl domains of lipoate-dependent enzymes, thereby converting the octanoylated domains into lipoylated derivatives. The polypeptide is Lipoyl synthase 1, mitochondrial (Phaeodactylum tricornutum (strain CCAP 1055/1)).